The following is an 835-amino-acid chain: Protein VP3 (835 aa).

The interval Lys171 to Arg245 is N7-methyltransferase activity. A 2'-O-methyltransferase activity region spans residues Trp246–Gly428. Positions Val429–Asn555 are N7-methyltransferase activity. Residues Lys556–Thr692 are GTase/RTPase activity. The segment at Tyr693–Glu835 is 2'-5'-phosphodiesterase activity. Active-site for 2'-5'-phosphodiesterase activity residues include His718, Thr720, His797, and Thr799.

Belongs to the rotavirus VP3 family. Interacts with VP1. Interacts with VP2.

The protein localises to the virion. It catalyses the reaction a 5'-end diphospho-ribonucleoside in mRNA + GTP + H(+) = a 5'-end (5'-triphosphoguanosine)-ribonucleoside in mRNA + diphosphate. The catalysed reaction is a 5'-end (5'-triphosphoguanosine)-ribonucleoside in mRNA + S-adenosyl-L-methionine = a 5'-end (N(7)-methyl 5'-triphosphoguanosine)-ribonucleoside in mRNA + S-adenosyl-L-homocysteine. The enzyme catalyses 5'-triphosphoadenylyl-(2'-&gt;5')-adenylyl-(2'-&gt;5')-adenosine + 2 H2O = 2 AMP + ATP + 2 H(+). Multifunctional enzyme involved in mRNA capping. Catalyzes the formation of the 5' cap structure on the viral plus-strand transcripts. Specifically binds to GTP and displays guanylyltransferase and methyltransferase activities. Has affinity for ssRNA but not for dsRNA. Capping activity is non-specific and caps RNAs that initiate with either a G or an A residue. Together with VP1 polymerase, forms a VP1-VP3 complex positioned near the channels situated at each of the five-fold vertices of the core. Following infection, the outermost layer of the virus is lost, leaving a double-layered particle (DLP) made up of the core and VP6 shell. VP1 then catalyzes the transcription of fully conservative plus-strand genomic RNAs that are capped by VP3 and extruded through the DLP's channels into the cytoplasm where they function as mRNAs for translation of viral proteins. DLPs probably have an RNA triphosphatase activity as well, whereas open cores do not. Its function is as follows. Counteracts the host innate immune response thanks to its phosphodiesterase that degrades the 5'-triphosphorylated, 2'-5' linked adenylate oligomers produced by the host cell IFN-inducible 2',5'-oligoadenylate synthetase (OAS). The host RNaseL is therefore not activated. The chain is Protein VP3 from Rotavirus A (strain RVA/Cow/United Kingdom/UK/1975/G6P7[5]) (RV-A).